We begin with the raw amino-acid sequence, 351 residues long: Thiamine-phosphate synthase (351 aa).

Residues 1–127 (MQNLAPASEG…SETAKALRYR (127 aa)) form a unknown region. The tract at residues 64-84 (RAARQTDQDPGTALSHPQERD) is disordered. The thiamine-phosphate synthase stretch occupies residues 128 to 351 (VYILEQALTL…LRRLSQGEPS (224 aa)). Residues 178-182 (QYRDK) and asparagine 210 each bind 4-amino-2-methyl-5-(diphosphooxymethyl)pyrimidine. Residues aspartate 211 and aspartate 230 each coordinate Mg(2+). Serine 249 contacts 4-amino-2-methyl-5-(diphosphooxymethyl)pyrimidine. Residue 275–277 (TPT) coordinates 2-[(2R,5Z)-2-carboxy-4-methylthiazol-5(2H)-ylidene]ethyl phosphate. 4-amino-2-methyl-5-(diphosphooxymethyl)pyrimidine is bound at residue lysine 278. A 2-[(2R,5Z)-2-carboxy-4-methylthiazol-5(2H)-ylidene]ethyl phosphate-binding site is contributed by glycine 305.

Belongs to the thiamine-phosphate synthase family. It depends on Mg(2+) as a cofactor.

The catalysed reaction is 2-[(2R,5Z)-2-carboxy-4-methylthiazol-5(2H)-ylidene]ethyl phosphate + 4-amino-2-methyl-5-(diphosphooxymethyl)pyrimidine + 2 H(+) = thiamine phosphate + CO2 + diphosphate. The enzyme catalyses 2-(2-carboxy-4-methylthiazol-5-yl)ethyl phosphate + 4-amino-2-methyl-5-(diphosphooxymethyl)pyrimidine + 2 H(+) = thiamine phosphate + CO2 + diphosphate. It catalyses the reaction 4-methyl-5-(2-phosphooxyethyl)-thiazole + 4-amino-2-methyl-5-(diphosphooxymethyl)pyrimidine + H(+) = thiamine phosphate + diphosphate. The protein operates within cofactor biosynthesis; thiamine diphosphate biosynthesis; thiamine phosphate from 4-amino-2-methyl-5-diphosphomethylpyrimidine and 4-methyl-5-(2-phosphoethyl)-thiazole: step 1/1. Functionally, condenses 4-methyl-5-(beta-hydroxyethyl)thiazole monophosphate (THZ-P) and 2-methyl-4-amino-5-hydroxymethyl pyrimidine pyrophosphate (HMP-PP) to form thiamine monophosphate (TMP). The chain is Thiamine-phosphate synthase from Thermosynechococcus vestitus (strain NIES-2133 / IAM M-273 / BP-1).